A 309-amino-acid chain; its full sequence is Aurora kinase C (309 aa).

The tract at residues 1-33 (MSSPRAVVQLGKAQPAGEELATANQTAQQPSSP) is disordered. The span at 22–32 (TANQTAQQPSS) shows a compositional bias: polar residues. The Protein kinase domain maps to 43-293 (FEIGRPLGKG…LAQILKHPWV (251 aa)). ATP-binding positions include 49 to 57 (LGKGKFGNV) and Lys72. The active-site Proton acceptor is the Asp166. At Thr198 the chain carries Phosphothreonine; by PKA. Residues 292-309 (WVQAHSRRVLPPCAQMAS) form an interaction with BIRC5 region.

The protein belongs to the protein kinase superfamily. Ser/Thr protein kinase family. Aurora subfamily. Component of the chromosomal passenger complex (CPC) composed of at least BIRC5/survivin, CDCA8/borealin, INCENP, AURKB or AURKC; predominantly independent AURKB- and AURKC-containing complexes exist; in the complex interacts directly with BIRC5/survivin and INCENP. Interacts with TACC1. As to expression, isoform 1 and isoform 2 are expressed in testis. Elevated expression levels were seen only in a subset of cancer cell lines such as Hep-G2, Huh-7 and HeLa. Expression is maximum at M phase.

The protein localises to the nucleus. Its subcellular location is the chromosome. The protein resides in the centromere. It is found in the cytoplasm. It localises to the cytoskeleton. The protein localises to the spindle. The enzyme catalyses L-seryl-[protein] + ATP = O-phospho-L-seryl-[protein] + ADP + H(+). The catalysed reaction is L-threonyl-[protein] + ATP = O-phospho-L-threonyl-[protein] + ADP + H(+). With respect to regulation, okadaic acid, an inhibitor of protein phosphatase 1 (PP1), protein phosphatase 2A (PP2A) and protein phosphatase 5 (PP5), increases AURKC activity. AURKC is also stabilized through its interaction with INCENP, which also acts as an activator. Functionally, serine/threonine-protein kinase component of the chromosomal passenger complex (CPC), a complex that acts as a key regulator of mitosis. The CPC complex has essential functions at the centromere in ensuring correct chromosome alignment and segregation and is required for chromatin-induced microtubule stabilization and spindle assembly. Also plays a role in meiosis and more particularly in spermatogenesis. Has redundant cellular functions with AURKB and can rescue an AURKB knockdown. Like AURKB, AURKC phosphorylates histone H3 at 'Ser-10' and 'Ser-28'. AURKC phosphorylates the CPC complex subunits BIRC5/survivin and INCENP leading to increased AURKC activity. Phosphorylates TACC1, another protein involved in cell division, at 'Ser-228'. This is Aurora kinase C (AURKC) from Homo sapiens (Human).